The sequence spans 74 residues: Exodeoxyribonuclease 7 small subunit (74 aa).

The protein belongs to the XseB family. Heterooligomer composed of large and small subunits.

The protein localises to the cytoplasm. The catalysed reaction is Exonucleolytic cleavage in either 5'- to 3'- or 3'- to 5'-direction to yield nucleoside 5'-phosphates.. Its function is as follows. Bidirectionally degrades single-stranded DNA into large acid-insoluble oligonucleotides, which are then degraded further into small acid-soluble oligonucleotides. The chain is Exodeoxyribonuclease 7 small subunit from Ruthia magnifica subsp. Calyptogena magnifica.